A 535-amino-acid polypeptide reads, in one-letter code: Probable acyl-activating enzyme 22 (535 aa).

This sequence belongs to the ATP-dependent AMP-binding enzyme family.

In terms of biological role, may act as an acid--thiol ligase that activates carboxylic acids by forming acyl-CoAs. This chain is Probable acyl-activating enzyme 22 (AEE22), found in Arabidopsis thaliana (Mouse-ear cress).